Consider the following 111-residue polypeptide: Cytochrome c6-like (111 aa).

An N-terminal signal peptide occupies residues 1 to 25 (MQKFLKLVLVTFLFLISTLTPPANA). Positions 39, 42, 43, and 83 each coordinate heme c.

This sequence belongs to the cytochrome c family. PetJ subfamily. In terms of processing, binds 1 heme c group covalently per subunit.

The protein resides in the cellular thylakoid lumen. The polypeptide is Cytochrome c6-like (Nostoc sp. (strain PCC 7120 / SAG 25.82 / UTEX 2576)).